The following is a 360-amino-acid chain: DNA replication and repair protein RecF (360 aa).

30 to 37 is an ATP binding site; sequence GVNGAGKT.

The protein belongs to the RecF family.

The protein localises to the cytoplasm. Its function is as follows. The RecF protein is involved in DNA metabolism; it is required for DNA replication and normal SOS inducibility. RecF binds preferentially to single-stranded, linear DNA. It also seems to bind ATP. The sequence is that of DNA replication and repair protein RecF from Thioalkalivibrio sulfidiphilus (strain HL-EbGR7).